Here is a 405-residue protein sequence, read N- to C-terminus: S-adenosylmethionine synthase (405 aa).

Residue 141–146 (GQGSVD) coordinates ATP.

Belongs to the AdoMet synthase 2 family. It depends on Mg(2+) as a cofactor.

The catalysed reaction is L-methionine + ATP + H2O = S-adenosyl-L-methionine + phosphate + diphosphate. It functions in the pathway amino-acid biosynthesis; S-adenosyl-L-methionine biosynthesis; S-adenosyl-L-methionine from L-methionine: step 1/1. In terms of biological role, catalyzes the formation of S-adenosylmethionine from methionine and ATP. In Methanococcus maripaludis (strain C6 / ATCC BAA-1332), this protein is S-adenosylmethionine synthase.